The chain runs to 330 residues: Beta-ketoacyl-[acyl-carrier-protein] synthase III (330 aa).

Active-site residues include C115 and H255. The interval 256-260 (QANFR) is ACP-binding. N285 is an active-site residue.

The protein belongs to the thiolase-like superfamily. FabH family. As to quaternary structure, homodimer.

It is found in the cytoplasm. It catalyses the reaction malonyl-[ACP] + acetyl-CoA + H(+) = 3-oxobutanoyl-[ACP] + CO2 + CoA. It participates in lipid metabolism; fatty acid biosynthesis. Its function is as follows. Catalyzes the condensation reaction of fatty acid synthesis by the addition to an acyl acceptor of two carbons from malonyl-ACP. Catalyzes the first condensation reaction which initiates fatty acid synthesis and may therefore play a role in governing the total rate of fatty acid production. Possesses both acetoacetyl-ACP synthase and acetyl transacylase activities. Its substrate specificity determines the biosynthesis of branched-chain and/or straight-chain of fatty acids. The chain is Beta-ketoacyl-[acyl-carrier-protein] synthase III from Helicobacter pylori (strain P12).